A 291-amino-acid polypeptide reads, in one-letter code: Formamidopyrimidine-DNA glycosylase (291 aa).

The active-site Schiff-base intermediate with DNA is Pro-2. Residue Glu-3 is the Proton donor of the active site. Residue Lys-58 is the Proton donor; for beta-elimination activity of the active site. Positions 104, 127, and 172 each coordinate DNA. The segment at 257–291 (FVYDRAGLPCRACGTPIRQIVQGQRSTFCCPTCQR) adopts an FPG-type zinc-finger fold. Residue Arg-281 is the Proton donor; for delta-elimination activity of the active site.

Belongs to the FPG family. In terms of assembly, monomer. The cofactor is Zn(2+).

The enzyme catalyses Hydrolysis of DNA containing ring-opened 7-methylguanine residues, releasing 2,6-diamino-4-hydroxy-5-(N-methyl)formamidopyrimidine.. It carries out the reaction 2'-deoxyribonucleotide-(2'-deoxyribose 5'-phosphate)-2'-deoxyribonucleotide-DNA = a 3'-end 2'-deoxyribonucleotide-(2,3-dehydro-2,3-deoxyribose 5'-phosphate)-DNA + a 5'-end 5'-phospho-2'-deoxyribonucleoside-DNA + H(+). Involved in base excision repair of DNA damaged by oxidation or by mutagenic agents. Acts as a DNA glycosylase that recognizes and removes damaged bases. Has a preference for oxidized purines, such as 7,8-dihydro-8-oxoguanine (8-oxoG). Has AP (apurinic/apyrimidinic) lyase activity and introduces nicks in the DNA strand. Cleaves the DNA backbone by beta-delta elimination to generate a single-strand break at the site of the removed base with both 3'- and 5'-phosphates. In Ralstonia pickettii (strain 12J), this protein is Formamidopyrimidine-DNA glycosylase.